A 187-amino-acid polypeptide reads, in one-letter code: MNLQHHFLIAMPSLSDPYFKRSVVYICEHNANGAMGLVINKPIEQISVRKVLQKLKISPEDRDESVNLNKPVMTGGPLAEDHGFILHTPKPGFSSSIKISDDTMITTSKDVLETLGTPRQPKQILVTLGYTSWEKGQLEKEIMENSWLTTNADPHIIFNSPIADRWREAASLLGINIYNIAPQAGHA.

It belongs to the UPF0301 (AlgH) family.

The chain is UPF0301 protein plu1183 from Photorhabdus laumondii subsp. laumondii (strain DSM 15139 / CIP 105565 / TT01) (Photorhabdus luminescens subsp. laumondii).